A 699-amino-acid chain; its full sequence is TPR repeat-containing thioredoxin TTL1 (699 aa).

A disordered region spans residues 1-211; the sequence is MPKSVKPISE…SSSRSSSTVA (211 aa). A compositionally biased stretch (basic and acidic residues) spans 9-20; the sequence is SESDKLSDHLRD. A phosphoserine mark is found at Ser39 and Ser42. 2 stretches are compositionally biased toward low complexity: residues 52–70 and 83–135; these read TTTT…SSGS and RSNS…TSPA. Residues 166–182 show a composition bias toward gly residues; sequence SGTGTYGHGSIMRGGGI. The segment covering 195–210 has biased composition (low complexity); sequence NSPVNVGSSSRSSSTV. TPR repeat units lie at residues 227 to 260, 262 to 294, 296 to 328, 419 to 452, 465 to 498, 499 to 532, and 534 to 566; these read SEEV…SPTN, AYRS…DPNY, RAHH…SDPM, AYIY…DPRC, VARA…DPCN, AILY…QPSY, and KPLL…LPHD. Positions 605–691 constitute a Thioredoxin domain; the sequence is QFKSAMNLPG…IVCPSKEVLE (87 aa).

Expressed in the root elongation zone, stele, root cap, embryo vascular system, leaf axilar buds, silique abscission zone and guard cells.

Involved in responses to osmotic stress and abscisic acid (ABA). May act as a positive regulator of ABA signaling during germination and seedling development under stress. This chain is TPR repeat-containing thioredoxin TTL1 (TTL1), found in Arabidopsis thaliana (Mouse-ear cress).